The following is a 226-amino-acid chain: ATP synthase F(0) complex subunit a (226 aa).

6 helical membrane-spanning segments follow: residues phenylalanine 6–phenylalanine 26, tryptophan 68–leucine 88, glutamine 97–phenylalanine 117, valine 138–valine 158, isoleucine 164–isoleucine 184, and phenylalanine 193–valine 213.

This sequence belongs to the ATPase A chain family. Component of the ATP synthase complex composed at least of ATP5F1A/subunit alpha, ATP5F1B/subunit beta, ATP5MC1/subunit c (homooctomer), MT-ATP6/subunit a, MT-ATP8/subunit 8, ATP5ME/subunit e, ATP5MF/subunit f, ATP5MG/subunit g, ATP5MK/subunit k, ATP5MJ/subunit j, ATP5F1C/subunit gamma, ATP5F1D/subunit delta, ATP5F1E/subunit epsilon, ATP5PF/subunit F6, ATP5PB/subunit b, ATP5PD/subunit d, ATP5PO/subunit OSCP. ATP synthase complex consists of a soluble F(1) head domain (subunits alpha(3) and beta(3)) - the catalytic core - and a membrane F(0) domain - the membrane proton channel (subunits c, a, 8, e, f, g, k and j). These two domains are linked by a central stalk (subunits gamma, delta, and epsilon) rotating inside the F1 region and a stationary peripheral stalk (subunits F6, b, d, and OSCP). Interacts with DNAJC30; interaction is direct.

Its subcellular location is the mitochondrion inner membrane. The enzyme catalyses H(+)(in) = H(+)(out). Its function is as follows. Subunit a, of the mitochondrial membrane ATP synthase complex (F(1)F(0) ATP synthase or Complex V) that produces ATP from ADP in the presence of a proton gradient across the membrane which is generated by electron transport complexes of the respiratory chain. ATP synthase complex consist of a soluble F(1) head domain - the catalytic core - and a membrane F(1) domain - the membrane proton channel. These two domains are linked by a central stalk rotating inside the F(1) region and a stationary peripheral stalk. During catalysis, ATP synthesis in the catalytic domain of F(1) is coupled via a rotary mechanism of the central stalk subunits to proton translocation. With the subunit c (ATP5MC1), forms the proton-conducting channel in the F(0) domain, that contains two crucial half-channels (inlet and outlet) that facilitate proton movement from the mitochondrial intermembrane space (IMS) into the matrix. Protons are taken up via the inlet half-channel and released through the outlet half-channel, following a Grotthuss mechanism. This is ATP synthase F(0) complex subunit a from Osphranter robustus (Wallaroo).